A 137-amino-acid chain; its full sequence is Acidic phospholipase A2 Vur-PL3 (137 aa).

A signal peptide spans Met1–Gly16. Intrachain disulfides connect Cys42-Cys131, Cys44-Cys60, Cys59-Cys111, Cys65-Cys137, Cys66-Cys104, Cys73-Cys97, and Cys91-Cys102. The Ca(2+) site is built by Tyr43, Gly45, and Gly47. Residue His63 is part of the active site. Asp64 contacts Ca(2+). Asp105 is a catalytic residue.

Requires Ca(2+) as cofactor. Expressed by the venom gland.

It localises to the secreted. The enzyme catalyses a 1,2-diacyl-sn-glycero-3-phosphocholine + H2O = a 1-acyl-sn-glycero-3-phosphocholine + a fatty acid + H(+). The polypeptide is Acidic phospholipase A2 Vur-PL3 (Vipera renardi (Steppe viper)).